Here is a 210-residue protein sequence, read N- to C-terminus: Chorismate pyruvate-lyase (210 aa).

It belongs to the chorismate pyruvate-lyase type 2 family.

The catalysed reaction is chorismate = 4-hydroxybenzoate + pyruvate. Its function is as follows. Removes the pyruvyl group from chorismate to provide 4-hydroxybenzoate (4HB). Involved in the synthesis of glycosylated p-hydroxybenzoic acid methyl esters (p-HBADs) and phenolic glycolipids (PGL) that play important roles in the pathogenesis of mycobacterial infections. This Mycobacterium leprae (strain TN) protein is Chorismate pyruvate-lyase.